Consider the following 178-residue polypeptide: Long polar fimbria protein A (178 aa).

The first 24 residues, 1-24 (MEFLMKKVVFALSALAVVSTSAFA), serve as a signal peptide directing secretion.

The protein belongs to the fimbrial protein family.

The protein localises to the fimbrium. The chain is Long polar fimbria protein A (lpfA) from Salmonella typhimurium (strain LT2 / SGSC1412 / ATCC 700720).